A 426-amino-acid chain; its full sequence is Glutamate-1-semialdehyde 2,1-aminomutase (426 aa).

At Lys-265 the chain carries N6-(pyridoxal phosphate)lysine.

Belongs to the class-III pyridoxal-phosphate-dependent aminotransferase family. HemL subfamily. In terms of assembly, homodimer. It depends on pyridoxal 5'-phosphate as a cofactor.

It is found in the cytoplasm. It carries out the reaction (S)-4-amino-5-oxopentanoate = 5-aminolevulinate. Its pathway is porphyrin-containing compound metabolism; protoporphyrin-IX biosynthesis; 5-aminolevulinate from L-glutamyl-tRNA(Glu): step 2/2. This is Glutamate-1-semialdehyde 2,1-aminomutase from Yersinia pestis bv. Antiqua (strain Antiqua).